Consider the following 360-residue polypeptide: NAD(P)H-quinone oxidoreductase subunit 1, chloroplastic (360 aa).

Transmembrane regions (helical) follow at residues V27 to I47, F98 to F118, I129 to G149, A165 to L185, F203 to L223, F253 to I273, V297 to I317, and F340 to L360.

It belongs to the complex I subunit 1 family. In terms of assembly, NDH is composed of at least 16 different subunits, 5 of which are encoded in the nucleus.

The protein localises to the plastid. The protein resides in the chloroplast thylakoid membrane. It carries out the reaction a plastoquinone + NADH + (n+1) H(+)(in) = a plastoquinol + NAD(+) + n H(+)(out). The catalysed reaction is a plastoquinone + NADPH + (n+1) H(+)(in) = a plastoquinol + NADP(+) + n H(+)(out). NDH shuttles electrons from NAD(P)H:plastoquinone, via FMN and iron-sulfur (Fe-S) centers, to quinones in the photosynthetic chain and possibly in a chloroplast respiratory chain. The immediate electron acceptor for the enzyme in this species is believed to be plastoquinone. Couples the redox reaction to proton translocation, and thus conserves the redox energy in a proton gradient. The sequence is that of NAD(P)H-quinone oxidoreductase subunit 1, chloroplastic from Draba nemorosa (Woodland whitlowgrass).